Reading from the N-terminus, the 34-residue chain is Potassium channel toxin alpha-KTx 6.3 (34 aa).

4 cysteine pairs are disulfide-bonded: Cys-3–Cys-24, Cys-9–Cys-29, Cys-13–Cys-31, and Cys-19–Cys-34. Position 34 is a cysteine amide (Cys-34).

Belongs to the short scorpion toxin superfamily. Potassium channel inhibitor family. Alpha-KTx 06 subfamily. Post-translationally, amidated. The amidated toxin shows 5-fold more affinity for Kv1.3/KCNA3 than the synthetic carboxylated form. Expressed by the venom gland.

It localises to the secreted. Potently blocks voltage-gated potassium channels Kv1.1/KCNA1 (IC(50)=7-11 nM) and Kv1.3/KCNA3 (IC(50)=11-29 pM). Also mildly blocks intermediate (IK) conductance calcium-activated potassium channels (KCa3.1/KCNN4) and ERG1/Kv11.1/KCNH2. Shows ability to suppress proliferation of lymphocytes, which are known to be sensitive to Kv1.3/KCNA3 homotetrameric channel block. The sequence is that of Potassium channel toxin alpha-KTx 6.3 from Heterometrus spinifer (Asia giant forest scorpion).